A 162-amino-acid chain; its full sequence is Auracyanin-A (162 aa).

An N-terminal signal peptide occupies residues 1–22; the sequence is MKITLRMMVLAVLTAMAMVLAA. The N-palmitoyl cysteine moiety is linked to residue Cys-23. Cys-23 carries the S-diacylglycerol cysteine lipid modification. Residues 42-162 form the Plastocyanin-like domain; that stretch reads VTIEIGSKGE…PLMQGKLVVN (121 aa). Positions 81, 146, 151, and 155 each coordinate Cu cation.

As to quaternary structure, monomer. It depends on Cu cation as a cofactor.

The protein resides in the cell membrane. Its function is as follows. Probably a soluble electron acceptor for the integral membrane protein electron transfer alternative complex III (ACIII). The polypeptide is Auracyanin-A (Chloroflexus aurantiacus (strain ATCC 29366 / DSM 635 / J-10-fl)).